We begin with the raw amino-acid sequence, 78 residues long: Acyl carrier protein (78 aa).

A Carrier domain is found at 2–77 (SDTAERVKKI…DAVKFIDKAS (76 aa)). O-(pantetheine 4'-phosphoryl)serine is present on Ser37.

This sequence belongs to the acyl carrier protein (ACP) family. 4'-phosphopantetheine is transferred from CoA to a specific serine of apo-ACP by AcpS. This modification is essential for activity because fatty acids are bound in thioester linkage to the sulfhydryl of the prosthetic group.

It localises to the cytoplasm. It participates in lipid metabolism; fatty acid biosynthesis. Carrier of the growing fatty acid chain in fatty acid biosynthesis. The chain is Acyl carrier protein from Brucella abortus (strain S19).